We begin with the raw amino-acid sequence, 2336 residues long: Genome polyprotein (2336 aa).

In terms of domain architecture, Peptidase C28 spans 1–201; that stretch reads MNTTDCFIAL…WKAKVQKRLK (201 aa). The Cytoplasmic segment spans residues 1 to 1481; sequence MNTTDCFIAL…SFVKRAFKRL (1481 aa). Catalysis depends on for leader protease activity residues Cys51, His148, and Asp163. 2 disordered regions span residues 197–218 and 238–265; these read QKRL…QSGN and QLGD…NTQN. Gly202 carries N-myristoyl glycine; by host lipidation. Composition is skewed to polar residues over residues 204–218 and 238–251; these read GQSS…QSGN and QLGD…SNEG. The segment covering 252-265 has biased composition (low complexity); that stretch reads STDTTSTHTTNTQN. The segment at 789-797 is antigenic epitope; the sequence is ALLRAATYY. The Cell attachment site signature appears at 869 to 871; the sequence is RGD. The region spanning 1190 to 1354 is the SF3 helicase domain; sequence NVHIANLCKV…DGYKVNNKLD (165 aa). 1218 to 1225 contacts ATP; it reads GKSGQGKS. An intramembrane segment occupies 1482 to 1502; sequence KENFEIVALCLTLLANIVIMI. Over 1503–2336 the chain is Cytoplasmic; it reads RETRKRQQMV…NAVCGDAQSL (834 aa). The tract at residues 1556–1591 is disordered; it reads PGHRASDDVNSEPARPVEEQPQAEGPYTGPLERQKP. O-(5'-phospho-RNA)-tyrosine is present on residues Tyr1582, Tyr1605, and Tyr1629. Residues 1653–1849 enclose the Peptidase C3 domain; it reads APPTDLQKMV…YCSCVSRSML (197 aa). His1696 (for protease 3C activity; Proton donor/acceptor) is an active-site residue. Active-site for protease 3C activity residues include Asp1734 and Cys1813. The short motif at 1879–1887 is the Nuclear localization signal element; sequence MRKTKLAPT. One can recognise a RdRp catalytic domain in the interval 2097 to 2215; it reads KNVWDVDYSA…ASDYDLDFEA (119 aa). The active-site For RdRp activity is Asp2201.

This sequence belongs to the picornaviruses polyprotein family. Interacts with host ISG15. As to quaternary structure, interacts (via R-G-D motif) with host ITGAV/ITGB6. Interacts with host MAVS; this interaction inhibits binding of host TRAF3 to MAVS, thereby suppressing interferon-mediated responses. In terms of assembly, forms homooligomers. Homohexamer. Interacts with host VIM. Interacts with host BECN1. As to quaternary structure, interacts with host DCTN3. In terms of assembly, interacts with RNA-dependent RNA polymerase; this interaction allows 3B-1 to binds 2 polymerases and act as a primer. It also allows the recruitment of the RNA-dependent RNA polymerase to host membranes. Interacts with RNA-dependent RNA polymerase; this interaction allows 3B-2 to act as a primer. As to quaternary structure, interacts with RNA-dependent RNA polymerase; this interaction allows 3B-3 to act as a primer. In terms of assembly, interacts with 3B-1; this interaction allows 3B-1 to binds 2 polymerases and act as a primer. It also allows the recruitment of the RNA-dependent RNA polymerase to host membranes. Interacts with 3B-2; this interaction allows 3B-2 to act as a primer. Interacts with 3B-3; this interaction allows 3B-3 to act as a primer. Removes six residues from its own C-terminus, generating sLb(pro). Post-translationally, specific enzymatic cleavages in vivo by the viral proteases yield a variety of precursors and mature proteins. The polyprotein seems to be cotranslationally cleaved at the 2A/2B junction by a ribosomal skip from one codon to the next without formation of a peptide bond. This process would release the L-P1-2A peptide from the translational complex. In terms of processing, during virion maturation, immature virions are rendered infectious following cleavage of VP0 into VP4 and VP2. This maturation seems to be an autocatalytic event triggered by the presence of RNA in the capsid and is followed by a conformational change of the particle. Myristoylation is required during RNA encapsidation and formation of the mature virus particle. Post-translationally, uridylylated by the polymerase and covalently linked to the 5'-end of genomic RNA. These uridylylated forms act as a nucleotide-peptide primer for the polymerase.

The protein localises to the host nucleus. Its subcellular location is the host cytoplasm. It is found in the virion. The protein resides in the host endoplasmic reticulum membrane. It localises to the host cytoplasmic vesicle membrane. It catalyses the reaction Autocatalytically cleaves itself from the polyprotein of the foot-and-mouth disease virus by hydrolysis of a Lys-|-Gly bond, but then cleaves host cell initiation factor eIF-4G at bonds -Gly-|-Arg- and -Lys-|-Arg-.. It carries out the reaction a ribonucleoside 5'-triphosphate + H2O = a ribonucleoside 5'-diphosphate + phosphate + H(+). The catalysed reaction is RNA(n) + a ribonucleoside 5'-triphosphate = RNA(n+1) + diphosphate. The enzyme catalyses Selective cleavage of Gln-|-Gly bond in the poliovirus polyprotein. In other picornavirus reactions Glu may be substituted for Gln, and Ser or Thr for Gly.. Its function is as follows. Autocatalytically cleaves itself from the polyprotein at the L/VP0 junction. Also cleaves the host translation initiation factors EIF4G1 and EIF4G3, in order to shut off the capped cellular mRNA transcription. Plays a role in counteracting host innate antiviral response using diverse mechanisms. Possesses a deubiquitinase activity acting on both 'Lys-48' and 'Lys-63'-linked polyubiquitin chains. In turn, inhibits the ubiquitination and subsequent activation of key signaling molecules of type I IFN response such as host RIGI, TBK1, TRAF3 and TRAF6. Inhibits host NF-kappa-B activity by inducing a decrease in RELA mRNA levels. Cleaves a peptide bond in the C-terminus of host ISG15, resulting in the damaging of this modifier that can no longer be attached to target proteins. Also cleaves host G3BP1 and G3BP2 in order to inhibit cytoplasmic stress granules assembly. Lies on the inner surface of the capsid shell. After binding to the host receptor, the capsid undergoes conformational changes. Capsid protein VP4 is released, capsid protein VP1 N-terminus is externalized, and together, they shape a pore in the host membrane through which the viral genome is translocated into the host cell cytoplasm. After genome has been released, the channel shrinks. In terms of biological role, forms an icosahedral capsid of pseudo T=3 symmetry with capsid proteins VP1 and VP3. The capsid is composed of 60 copies of each capsid protein organized in the form of twelve pentamers and encloses the viral positive strand RNA genome. Upon acidifcation in the endosome, dissociates into pentamers. Functionally, forms an icosahedral capsid of pseudo T=3 symmetry with capsid proteins VP0 and VP3. The capsid is composed of 60 copies of each capsid protein organized in the form of twelve pentamers and encloses the viral positive strand RNA genome. Upon acidifcation in the endosome, dissociates into pentamers. Its function is as follows. Forms an icosahedral capsid of pseudo T=3 symmetry with capsid proteins VP2 and VP3. The capsid is composed of 60 copies of each capsid protein organized in the form of twelve pentamers and encloses the viral positive strand RNA genome. Mediates cell entry by attachment to an integrin receptor, usually host ITGAV/ITGB6. In addition, targets host MAVS to suppress type I IFN pathway. Upon acidifcation in the endosome, dissociates into pentamers. Mediates self-processing of the polyprotein by a translational effect termed 'ribosome skipping'. Mechanistically, 2A-mediated cleavage occurs between the C-terminal glycine and the proline of the downstream protein 2B. In the case of foot-and-mouth disease virus, the 2A oligopeptide is post-translationally 'trimmed' from the C-terminus of the upstream protein 1D by 3C proteinase. In terms of biological role, plays an essential role in the virus replication cycle by acting as a viroporin. Creates a pore in the host endoplasmic reticulum and as a consequence releases Ca2+ in the cytoplasm of infected cell. In turn, high levels of cytoplasmic calcium may trigger membrane trafficking and transport of viral ER-associated proteins to viroplasms, sites of viral genome replication. Functionally, associates with and induces structural rearrangements of intracellular membranes. Triggers host autophagy by interacting with host BECN1 and thereby promotes viral replication. Participates in viral replication and interacts with host DHX9. Displays RNA-binding, nucleotide binding and NTPase activities. May play a role in virion morphogenesis and viral RNA encapsidation by interacting with the capsid protein VP3. Its function is as follows. Plays important roles in virus replication, virulence and host range. Cooperates with host DDX56 to inhibit IRF3 nuclear translocation and subsequent type I interferon production. Covalently linked to the 5'-end of both the positive-strand and negative-strand genomic RNAs. Acts as a genome-linked replication primer. In terms of biological role, cysteine protease that generates mature viral proteins from the precursor polyprotein. In addition to its proteolytic activity, binds to viral RNA and thus influences viral genome replication. RNA and substrate bind cooperatively to the protease. Functionally, RNA-directed RNA polymerase 3D-POL replicates genomic and antigenomic RNA by recognizing replications specific signals. Covalently attaches UMP to a tyrosine of VPg, which is used to prime RNA synthesis. The positive stranded RNA genome is first replicated at virus induced membranous vesicles, creating a dsRNA genomic replication form. This dsRNA is then used as template to synthesize positive stranded RNA genomes. ss(+)RNA genomes are either translated, replicated or encapsidated. This Foot-and-mouth disease virus (isolate -/Azerbaijan/A22-550/1965 serotype A) (FMDV) protein is Genome polyprotein.